The chain runs to 257 residues: Snake venom serine protease KN10 (257 aa).

A signal peptide spans M1 to A18. The propeptide occupies Q19 to L24. Positions V25–A248 constitute a Peptidase S1 domain. Intrachain disulfides connect C31/C162, C49/C65, C141/C209, C173/C188, and C199/C224. H64 serves as the catalytic Charge relay system. A glycan (N-linked (GlcNAc...) asparagine) is linked at N102. Catalysis depends on D109, which acts as the Charge relay system. N-linked (GlcNAc...) asparagine glycans are attached at residues N120 and N121. S203 functions as the Charge relay system in the catalytic mechanism.

Belongs to the peptidase S1 family. Snake venom subfamily. As to quaternary structure, monomer. Expressed by the venom gland.

The protein localises to the secreted. Its function is as follows. Snake venom serine protease that may act in the hemostasis system of the prey. The protein is Snake venom serine protease KN10 of Trimeresurus stejnegeri (Chinese green tree viper).